The chain runs to 172 residues: Zinc finger protein 580 (172 aa).

Residues 1–93 (MLLLPPRPPH…GEPGPRKGYS (93 aa)) form a disordered region. A compositionally biased stretch (pro residues) spans 19–30 (MDPPPPKAPPFP). Residue K31 forms a Glycyl lysine isopeptide (Lys-Gly) (interchain with G-Cter in SUMO2) linkage. Residues 31-44 (KAEGPSSTPSSAAG) are compositionally biased toward low complexity. Pro residues predominate over residues 75–86 (GPPQREAPPGEP). A C2H2-type 1 zinc finger spans residues 92-114 (YSCPECARVFASPLRLQSHRVSH). A Glycyl lysine isopeptide (Lys-Gly) (interchain with G-Cter in SUMO2) cross-link involves residue K118. 2 consecutive C2H2-type zinc fingers follow at residues 120 to 142 (FTCGACGKAFKRSSHLSRHRATH) and 150 to 172 (HTCPLCPRRFQDAAELAQHVRLH).

In terms of assembly, interacts with SMAD2. As to expression, expressed in endothelial cells.

The protein localises to the nucleus. In terms of biological role, involved in the regulation of endothelial cell proliferation and migration. Mediates H(2)O(2)-induced leukocyte chemotaxis by elevating interleukin-8 production and may play a role in inflammation. May be involved in transcriptional regulation. This Homo sapiens (Human) protein is Zinc finger protein 580 (ZNF580).